The sequence spans 412 residues: Kelch repeat-containing protein At1g19470 (412 aa).

The segment at 1-55 (MVNISEIPDDSNDGCDPNKKPEEQVLRRSRRIATRNENQNKKPKEEEEEDNRSVS) is disordered. Positions 16-26 (DPNKKPEEQVL) are enriched in basic and acidic residues. Kelch repeat units follow at residues 156–202 (EMYV…VVDG), 203–250 (KIYV…SAHA), 255–291 (KLYM…WDKT), and 292–345 (CCVV…EMAN).

This chain is Kelch repeat-containing protein At1g19470, found in Arabidopsis thaliana (Mouse-ear cress).